The sequence spans 416 residues: Vacuole membrane protein KMS2 (416 aa).

An N-acetylglycine modification is found at Gly2. At 2 to 59 (GYGNRASSKTPAISGLREKHQQDLEKLTLTSQPFKTLRLFVVAVFLYVRRWSSYLLAN) the chain is on the cytoplasmic side. The helical transmembrane segment at 60–80 (VGWLILFCSIFVAFAALLVTL) threads the bilayer. The Lumenal segment spans residues 81-100 (DGPHVKHVEELSEYTRFGLW). A helical transmembrane segment spans residues 101–123 (WIFLGVASSIGLGSGLHTFVLYL). The Cytoplasmic segment spans residues 124–249 (GPHIALFTIK…WLLSHSQYLN (126 aa)). Residues 250–270 (FFTILILASVPNPLFDLAGIM) form a helical membrane-spanning segment. Residues 271 to 281 (CGQFEKPFWEF) lie on the Lumenal side of the membrane. The chain crosses the membrane as a helical span at residues 282 to 304 (FLATLIGKAIIKTHIQTVFIICV). The Cytoplasmic segment spans residues 305 to 315 (CNNQLLDWVEN). Residues 316–336 (ELIYILSFVPGFASALPELTA) form a helical membrane-spanning segment. Residues 337-364 (KLRLMKEKYLIASPPVSSDINVKKWDLS) are Lumenal-facing. A helical membrane pass occupies residues 365–385 (FASVWNGVVWLMLLNFFGQIV). The Cytoplasmic segment spans residues 386-416 (TSTAQRYLKKQQEEELDALTNKSSLTSKKSK).

Belongs to the VMP1 family.

The protein resides in the endoplasmic reticulum membrane. Its function is as follows. Involved in the early secretory pathway. Required for the correct export of secretory products from the endoplasmic reticulum (ER) and involved in the maintenance of ER integrity. The sequence is that of Vacuole membrane protein KMS2 from Arabidopsis thaliana (Mouse-ear cress).